We begin with the raw amino-acid sequence, 177 residues long: Iron-sulfur cluster assembly protein SufA (177 aa).

The first 18 residues, 1-18 (MTIHIFLCFLLILKIVNA), serve as a signal peptide directing secretion. Residues cysteine 101, cysteine 169, and cysteine 171 each coordinate [4Fe-4S] cluster.

The protein belongs to the HesB/IscA family. In terms of assembly, homodimer. Homotetramer formation is observed in vitro.

It is found in the plastid. Its subcellular location is the apicoplast. The protein operates within cofactor biosynthesis; iron-sulfur cluster biosynthesis. Participates in the sulfur mobilization (SUF) pathway for iron-sulfur (Fe-S) cluster biogenesis. Involved in the pre-assembly of [4Fe-4S] clusters and their transfer to target proteins. The polypeptide is Iron-sulfur cluster assembly protein SufA (Plasmodium falciparum (isolate 3D7)).